The primary structure comprises 48 residues: Small, acid-soluble spore protein P (48 aa).

The span at methionine 1–lysine 12 shows a compositional bias: basic and acidic residues. Residues methionine 1–methionine 48 are disordered. The span at lysine 31–methionine 48 shows a compositional bias: basic residues.

The protein belongs to the SspP family.

It localises to the spore core. This is Small, acid-soluble spore protein P from Geobacillus thermodenitrificans (strain NG80-2).